Here is a 416-residue protein sequence, read N- to C-terminus: MKSVLRIAAAIFWLWLFIVLGVIGSGNVRDTDDEISLLESQLVVTSPSQLLMVPLTLIQAAASKGAVCLDGTLPGYHLHPGSGSGANRWLIQLEGGGWCNTRRSCIFRKTTRRGSSNHMEKVLAFTGILSNKSNENPDFFNWNRVKLRYCDGASFTGDSQDESSQLYYRGQRIWHSAMEELLSKGMQKAEQALLSGCSAGGLASILHCDQFKELFPGTTTVKCLSDAGMFMDAVDVSGGHSLRKMFQGVVTVQNLQKELSTACTKHLDPTSCFFPQNLVSGIKTPMFLLNAAYDAWQVQESLAPPSVDLSGSWKACKSDHSHCNSSQIQFFQDFRTHMVDAVKSFATSTHNGVFINSCFAHCQSERQDTWYAPDSPTLHGKTVAESVGDWYFDRTTVKAIDCPYPCDKTCHNLIFK.

A signal peptide spans 1–25 (MKSVLRIAAAIFWLWLFIVLGVIGS). Asparagine 131 is a glycosylation site (N-linked (GlcNAc...) asparagine). Residues serine 198 and aspartate 294 each act as charge relay system in the active site. An N-linked (GlcNAc...) asparagine glycan is attached at asparagine 324. Histidine 361 (charge relay system) is an active-site residue.

Belongs to the pectinacetylesterase family.

It is found in the secreted. It localises to the cell wall. Functionally, hydrolyzes acetyl esters in homogalacturonan regions of pectin. In type I primary cell wall, galacturonic acid residues of pectin can be acetylated at the O-2 and O-3 positions. Decreasing the degree of acetylation of pectin gels in vitro alters their physical properties. This chain is Pectin acetylesterase 3, found in Arabidopsis thaliana (Mouse-ear cress).